Here is a 1120-residue protein sequence, read N- to C-terminus: Transcription-repair-coupling factor (1120 aa).

Residues 591–756 (DLSNGMLMDR…MTGLKELSII (166 aa)) enclose the Helicase ATP-binding domain. Residue 604–611 (GDVGFGKT) participates in ATP binding. The DEEQ box motif lies at 709 to 712 (DEEQ). Residues 777–931 (IIRDALLHEH…GFTIASHDMD (155 aa)) form the Helicase C-terminal domain.

It in the N-terminal section; belongs to the UvrB family. In the C-terminal section; belongs to the helicase family. RecG subfamily.

Its subcellular location is the cytoplasm. In terms of biological role, couples transcription and DNA repair by recognizing RNA polymerase (RNAP) stalled at DNA lesions. Mediates ATP-dependent release of RNAP and its truncated transcript from the DNA, and recruitment of nucleotide excision repair machinery to the damaged site. In Rickettsia bellii (strain RML369-C), this protein is Transcription-repair-coupling factor.